Here is a 366-residue protein sequence, read N- to C-terminus: Carbamoyl phosphate synthase small chain (366 aa).

Positions 1 to 171 (MLEKRYLVLE…KTPYVSTGSD (171 aa)) are CPSase. 3 residues coordinate L-glutamine: S47, G221, and G223. In terms of domain architecture, Glutamine amidotransferase type-1 spans 173–360 (SVVLLDFGKK…ITMMKDFKEK (188 aa)). C248 functions as the Nucleophile in the catalytic mechanism. Residues L249, Q252, N290, G292, and Y293 each contribute to the L-glutamine site. Residues H333 and E335 contribute to the active site.

Belongs to the CarA family. Composed of two chains; the small (or glutamine) chain promotes the hydrolysis of glutamine to ammonia, which is used by the large (or ammonia) chain to synthesize carbamoyl phosphate. Tetramer of heterodimers (alpha,beta)4.

The catalysed reaction is hydrogencarbonate + L-glutamine + 2 ATP + H2O = carbamoyl phosphate + L-glutamate + 2 ADP + phosphate + 2 H(+). It carries out the reaction L-glutamine + H2O = L-glutamate + NH4(+). Its pathway is amino-acid biosynthesis; L-arginine biosynthesis; carbamoyl phosphate from bicarbonate: step 1/1. It functions in the pathway pyrimidine metabolism; UMP biosynthesis via de novo pathway; (S)-dihydroorotate from bicarbonate: step 1/3. Functionally, small subunit of the glutamine-dependent carbamoyl phosphate synthetase (CPSase). CPSase catalyzes the formation of carbamoyl phosphate from the ammonia moiety of glutamine, carbonate, and phosphate donated by ATP, constituting the first step of 2 biosynthetic pathways, one leading to arginine and/or urea and the other to pyrimidine nucleotides. The small subunit (glutamine amidotransferase) binds and cleaves glutamine to supply the large subunit with the substrate ammonia. This chain is Carbamoyl phosphate synthase small chain, found in Staphylococcus epidermidis (strain ATCC 35984 / DSM 28319 / BCRC 17069 / CCUG 31568 / BM 3577 / RP62A).